The chain runs to 398 residues: Beta-1,4-galactosyltransferase 1 (398 aa).

The Cytoplasmic segment spans residues 1-24 (MRLREPLLSGSAAMPGASLQRACR). Residues 25–44 (LLVAVCALHLGVTLVYYLAG) form a helical; Signal-anchor for type II membrane protein membrane-spanning segment. The Lumenal segment spans residues 45 to 398 (RDLSRLPQLV…QITVDIGTPS (354 aa)). Polar residues predominate over residues 61-76 (QGGSNSAAAIGQSSGE). Positions 61–117 (QGGSNSAAAIGQSSGELRTGGARPPPPLGASSQPRPGGDSSPVVDSGPGPASNLTSV) are disordered. N-linked (GlcNAc...) asparagine glycosylation occurs at Asn113. Cys130 and Cys172 are oxidised to a cystine. UDP-alpha-D-galactose contacts are provided by residues 183-187 (PFRNR), 222-224 (FNR), 249-250 (VD), and Trp310. Cys243 and Cys262 are joined by a disulfide. A Mn(2+)-binding site is contributed by Asp250. Residue 312–315 (GEDD) participates in N-acetyl-D-glucosamine binding. His343 lines the Mn(2+) pocket. A UDP-alpha-D-galactose-binding site is contributed by 343-346 (HSRD). Arg355 contributes to the N-acetyl-D-glucosamine binding site.

This sequence belongs to the glycosyltransferase 7 family. Homodimer; and heterodimer with alpha-lactalbumin to form lactose synthase. Interacts (via N-terminal cytoplasmic domain) with UBE2Q1 (via N-terminus); the interaction is direct. The cofactor is Mn(2+). In terms of processing, the soluble form derives from the membrane forms by proteolytic processing. As to expression, ubiquitously expressed, but at very low levels in fetal and adult brain.

The protein resides in the golgi apparatus. It localises to the golgi stack membrane. It is found in the cell membrane. Its subcellular location is the cell surface. The protein localises to the cell projection. The protein resides in the filopodium. It localises to the secreted. It carries out the reaction D-glucose + UDP-alpha-D-galactose = lactose + UDP + H(+). It catalyses the reaction an N-acetyl-beta-D-glucosaminyl derivative + UDP-alpha-D-galactose = a beta-D-galactosyl-(1-&gt;4)-N-acetyl-beta-D-glucosaminyl derivative + UDP + H(+). The enzyme catalyses N-acetyl-D-glucosamine + UDP-alpha-D-galactose = beta-D-galactosyl-(1-&gt;4)-N-acetyl-D-glucosamine + UDP + H(+). The catalysed reaction is a beta-D-GlcNAc-(1-&gt;3)-beta-D-Gal-(1-&gt;4)-beta-D-Glc-(1&lt;-&gt;1)-Cer(d18:1(4E)) + UDP-alpha-D-galactose = a neolactoside nLc4Cer(d18:1(4E)) + UDP + H(+). It carries out the reaction a beta-D-glucosylceramide + UDP-alpha-D-galactose = a beta-D-galactosyl-(1-&gt;4)-beta-D-glucosyl-(1&lt;-&gt;1)-ceramide + UDP + H(+). It catalyses the reaction a neolactoside IV(3)-beta-GlcNAc-nLc4Cer + UDP-alpha-D-galactose = a neolactoside nLc6Cer + UDP + H(+). It participates in protein modification; protein glycosylation. The Golgi complex form catalyzes the production of lactose in the lactating mammary gland and could also be responsible for the synthesis of complex-type N-linked oligosaccharides in many glycoproteins as well as the carbohydrate moieties of glycolipids. Functionally, the cell surface form functions as a recognition molecule during a variety of cell to cell and cell to matrix interactions, as those occurring during development and egg fertilization, by binding to specific oligosaccharide ligands on opposing cells or in the extracellular matrix. The polypeptide is Beta-1,4-galactosyltransferase 1 (Homo sapiens (Human)).